A 161-amino-acid polypeptide reads, in one-letter code: Nucleotide-binding protein Nmul_A1044 (161 aa).

The protein belongs to the YajQ family.

In terms of biological role, nucleotide-binding protein. This Nitrosospira multiformis (strain ATCC 25196 / NCIMB 11849 / C 71) protein is Nucleotide-binding protein Nmul_A1044.